Here is a 276-residue protein sequence, read N- to C-terminus: Putative ripening-related protein 5 (276 aa).

An N-terminal signal peptide occupies residues 1–18; sequence MAMIFLLAALSTTHLASS.

Belongs to the kiwellin family.

The protein localises to the secreted. This Oryza sativa subsp. japonica (Rice) protein is Putative ripening-related protein 5.